The following is a 108-amino-acid chain: Parvalbumin beta (108 aa).

Residue Ala-1 is modified to N-acetylalanine. EF-hand domains lie at 38–73 (KSNE…FSAG) and 77–108 (LTKT…LVKA). Residues Asp-51, Asp-53, Ser-55, Phe-57, Glu-59, Glu-62, Asp-90, Asp-92, Asp-94, Lys-96, and Glu-101 each contribute to the Ca(2+) site.

This sequence belongs to the parvalbumin family.

In terms of biological role, in muscle, parvalbumin is thought to be involved in relaxation after contraction. It binds two calcium ions. The chain is Parvalbumin beta from Latimeria chalumnae (Coelacanth).